Consider the following 307-residue polypeptide: Ribulose bisphosphate carboxylase/oxygenase activase, chloroplastic (307 aa).

The N-terminal 46 residues, 1–46 (MSIPDDKEAGTIDEFLQKEGVLDILQKLDHDLVGLKPVKDRVREIA), are a transit peptide targeting the chloroplast. ATP is bound at residue 73–80 (GSPGTGKT).

It belongs to the CbxX/CfxQ family. Forms homooligomers. Forms heterohexameric rings with the plastid-encoded Rca subunit consisting of 3 of each nuclear- and plastidial-encoded subunits that alternate in the ring.

The protein resides in the plastid. The protein localises to the chloroplast. In terms of biological role, required for the expression of ribulose 1,5-bisphosphate carboxylase/oxygenase (RuBisCo). ATPase involved in the activation of red-type RuBisCo, which tends to form inactive complexes with its substrate ribulose 1,5-bisphosphate (RuBP). Catalyzes the release of RuBP from inhibited RuBisCo in an ATP-dependent manner. Activation of RuBisCO involves the ATP-dependent carboxylation of the epsilon-amino group of lysine leading to a carbamate structure. The nuclear-encoded subunit plays a more critical role in activase function than the plastidial-encoded subunit. This is Ribulose bisphosphate carboxylase/oxygenase activase, chloroplastic from Cyanidioschyzon merolae (strain NIES-3377 / 10D) (Unicellular red alga).